Consider the following 367-residue polypeptide: Heme A synthase (367 aa).

Helical transmembrane passes span 12–32 (GAVR…VAVG), 99–119 (LLGR…WWQG), 127–147 (LGLL…WIMV), 163–183 (LALH…LAAG), and 198–218 (ATAL…GLVA). His264 contributes to the heme binding site. 3 consecutive transmembrane segments (helical) span residues 266–286 (VTAY…RLTG), 296–316 (GVVI…LLAV), and 317–337 (PLWA…MATV). His324 contributes to the heme binding site.

The protein belongs to the COX15/CtaA family. Type 2 subfamily. In terms of assembly, interacts with CtaB. Requires heme b as cofactor.

The protein resides in the cell membrane. The enzyme catalyses Fe(II)-heme o + 2 A + H2O = Fe(II)-heme a + 2 AH2. Its pathway is porphyrin-containing compound metabolism; heme A biosynthesis; heme A from heme O: step 1/1. Functionally, catalyzes the conversion of heme O to heme A by two successive hydroxylations of the methyl group at C8. The first hydroxylation forms heme I, the second hydroxylation results in an unstable dihydroxymethyl group, which spontaneously dehydrates, resulting in the formyl group of heme A. The chain is Heme A synthase from Methylobacterium radiotolerans (strain ATCC 27329 / DSM 1819 / JCM 2831 / NBRC 15690 / NCIMB 10815 / 0-1).